The chain runs to 877 residues: Probable sulfate permease C3H7.02 (877 aa).

13 helical membrane passes run 133 to 153, 161 to 181, 186 to 206, 221 to 241, 243 to 263, 292 to 312, 329 to 349, 384 to 404, 424 to 444, 461 to 481, 484 to 504, 518 to 538, and 543 to 563; these read WLVY…PQGM, LPAQ…CIFA, VSIG…ANVQ, LALL…GFII, FIPV…IMAG, LPHT…LYLV, VFFL…TAIS, LCAD…LEHI, LIAM…PATG, LGGI…TGAF, IPNA…IIPW, ALIF…NGIY, and LSAA…LGIL. One can recognise an STAS domain in the interval 594 to 747; the sequence is NLTVRDPPAG…SRSIEVGSAA (154 aa). Disordered stretches follow at residues 643–663 and 793–821; these read KASD…APEV and ADSD…TFSH. Positions 801 to 821 are enriched in basic and acidic residues; that stretch reads SDDKDKKVEGHRPSQDPTFSH.

The protein belongs to the SLC26A/SulP transporter (TC 2.A.53) family.

It is found in the membrane. Functionally, high affinity uptake of sulfate into the cell. The chain is Probable sulfate permease C3H7.02 from Schizosaccharomyces pombe (strain 972 / ATCC 24843) (Fission yeast).